A 572-amino-acid polypeptide reads, in one-letter code: Urease subunit alpha (572 aa).

In terms of domain architecture, Urease spans 133 to 572 (GGIDLHVHYI…TSLSQRYFLF (440 aa)). His-138, His-140, and Lys-221 together coordinate Ni(2+). Position 221 is an N6-carboxylysine (Lys-221). Substrate is bound at residue His-223. Ni(2+) is bound by residues His-250 and His-276. The Proton donor role is filled by His-324. Asp-364 is a Ni(2+) binding site.

The protein belongs to the metallo-dependent hydrolases superfamily. Urease alpha subunit family. In terms of assembly, heterotrimer of UreA (gamma), UreB (beta) and UreC (alpha) subunits. Three heterotrimers associate to form the active enzyme. Ni cation is required as a cofactor. Carboxylation allows a single lysine to coordinate two nickel ions.

The protein resides in the cytoplasm. The catalysed reaction is urea + 2 H2O + H(+) = hydrogencarbonate + 2 NH4(+). It functions in the pathway nitrogen metabolism; urea degradation; CO(2) and NH(3) from urea (urease route): step 1/1. In terms of biological role, ureolysis may allow urea to be employed as a nitrogen source for growth and produces ammonia which may protect from killing at low pH. This is Urease subunit alpha from Streptococcus salivarius (strain 57.I).